Consider the following 57-residue polypeptide: uncharacterized protein (57 aa).

The protein localises to the plastid. This is an uncharacterized protein from Euglena longa (Euglenophycean alga).